The sequence spans 472 residues: 3-isopropylmalate dehydratase large subunit (472 aa).

Residues C353, C414, and C417 each contribute to the [4Fe-4S] cluster site.

Belongs to the aconitase/IPM isomerase family. LeuC type 1 subfamily. Heterodimer of LeuC and LeuD. [4Fe-4S] cluster is required as a cofactor.

The catalysed reaction is (2R,3S)-3-isopropylmalate = (2S)-2-isopropylmalate. The protein operates within amino-acid biosynthesis; L-leucine biosynthesis; L-leucine from 3-methyl-2-oxobutanoate: step 2/4. Catalyzes the isomerization between 2-isopropylmalate and 3-isopropylmalate, via the formation of 2-isopropylmaleate. The protein is 3-isopropylmalate dehydratase large subunit of Acinetobacter baumannii (strain AB307-0294).